The sequence spans 444 residues: Forkhead box protein F2 (444 aa).

Positions 32–98 (PAAAAAAAAA…KKASSGLRRP (67 aa)) are disordered. Positions 34–75 (AAAAAAAAPETTSSSSSSSSASCASSSSSSNSASAPSAACKS) are enriched in low complexity. Positions 76 to 87 (AGGGGAGAGSGG) are enriched in gly residues. The segment at residues 99–190 (EKPPYSYIAL…EFMFEEGSFR (92 aa)) is a DNA-binding region (fork-head). Disordered regions lie at residues 256 to 323 (GAGA…SPAM) and 338 to 367 (AHWS…SAGL). The segment covering 263–274 (AHPHHHHHHHVP) has biased composition (basic residues). Residues 293-308 (GPGGVGAAGGGGGGDY) show a composition bias toward gly residues. Residues 309–323 (GPDSSSSPVPSSPAM) show a composition bias toward low complexity.

In terms of assembly, interacts with the transcription factors TBP and TFIIB. As to expression, lung and placenta. Predominantly expressed in gastrointestinal tract including stomach.

The protein resides in the nucleus. Probable transcription activator for a number of lung-specific genes. Mediates up-regulation of the E3 ligase IRF2BPL and drives ubiquitination and degradation of CTNNB1. The chain is Forkhead box protein F2 (FOXF2) from Homo sapiens (Human).